A 290-amino-acid chain; its full sequence is MEWSLTQNKLLAFHRLMRTDKPIGALLLLWPTLWALWVATPGVPQLWILAVFVAGVWLMRAAGCVVNDYADRKFDGHVKRTANRPLPSGAVTEKEARALFVVLVLISFLLVLTLNTMTILLSIAALALAWVYPFMKRYTHLPQVVLGAAFGWSIPMAFAAVSESVPLSCWLMFLANILWAVAYDTQYAMVDRDDDVKIGIKSTAILFGQYDKLIIGILQIGVLALMAIIGELNGLGWGYYWSILVAGALFVYQQKLIANREREACFKAFMNNNYVGLVLFLGLAMSYWHF.

A run of 8 helical transmembrane segments spans residues 23–43 (IGALLLLWPTLWALWVATPGV), 46–66 (LWILAVFVAGVWLMRAAGCVV), 99–119 (LFVVLVLISFLLVLTLNTMTI), 141–161 (LPQVVLGAAFGWSIPMAFAAV), 163–183 (ESVPLSCWLMFLANILWAVAY), 213–233 (LIIGILQIGVLALMAIIGELN), 234–254 (GLGWGYYWSILVAGALFVYQQ), and 268–288 (AFMNNNYVGLVLFLGLAMSYW).

This sequence belongs to the UbiA prenyltransferase family. Mg(2+) serves as cofactor.

It localises to the cell inner membrane. It carries out the reaction all-trans-octaprenyl diphosphate + 4-hydroxybenzoate = 4-hydroxy-3-(all-trans-octaprenyl)benzoate + diphosphate. It functions in the pathway cofactor biosynthesis; ubiquinone biosynthesis. Functionally, catalyzes the prenylation of para-hydroxybenzoate (PHB) with an all-trans polyprenyl group. Mediates the second step in the final reaction sequence of ubiquinone-8 (UQ-8) biosynthesis, which is the condensation of the polyisoprenoid side chain with PHB, generating the first membrane-bound Q intermediate 3-octaprenyl-4-hydroxybenzoate. This is 4-hydroxybenzoate octaprenyltransferase from Escherichia coli O6:K15:H31 (strain 536 / UPEC).